The following is a 358-amino-acid chain: Protein-glutamate methylesterase/protein-glutamine glutaminase 2 (358 aa).

The region spanning 8–125 (RVLIVDDSAV…ARGLEGYAEE (118 aa)) is the Response regulatory domain. Position 59 is a 4-aspartylphosphate (Asp-59). The 196-residue stretch at 157–352 (PMPGSALRFR…LDRVAERLLA (196 aa)) folds into the CheB-type methylesterase domain. Residues Ser-177, His-203, and Asp-299 contribute to the active site.

It belongs to the CheB family. In terms of processing, phosphorylated by CheA. Phosphorylation of the N-terminal regulatory domain activates the methylesterase activity.

It is found in the cytoplasm. The enzyme catalyses [protein]-L-glutamate 5-O-methyl ester + H2O = L-glutamyl-[protein] + methanol + H(+). It carries out the reaction L-glutaminyl-[protein] + H2O = L-glutamyl-[protein] + NH4(+). Its function is as follows. Involved in chemotaxis. Part of a chemotaxis signal transduction system that modulates chemotaxis in response to various stimuli. Catalyzes the demethylation of specific methylglutamate residues introduced into the chemoreceptors (methyl-accepting chemotaxis proteins or MCP) by CheR. Also mediates the irreversible deamidation of specific glutamine residues to glutamic acid. The protein is Protein-glutamate methylesterase/protein-glutamine glutaminase 2 of Xanthomonas oryzae pv. oryzae (strain MAFF 311018).